The primary structure comprises 176 residues: DNA-directed RNA polymerase II subunit 7 (176 aa).

The protein belongs to the eukaryotic RPB7/RPC8 RNA polymerase subunit family. In terms of assembly, component of the RNA polymerase II complex consisting of at least 12 subunits. Interacts with NRPB4.

It is found in the nucleus. DNA-dependent RNA polymerase catalyzes the transcription of DNA into RNA using the four ribonucleoside triphosphates as substrates. Component of RNA polymerase II which synthesizes mRNA precursors and many functional non-coding RNAs. Pol II is the central component of the basal RNA polymerase II transcription machinery. It is composed of mobile elements that move relative to each other. NRPB7 is part of a subcomplex with NRPB4 that binds to a pocket formed by NRPB1, NRPB2 and NRPB6 at the base of the clamp element. The NRBP4-NRPB7 subcomplex seems to lock the clamp via NRPB7 in the closed conformation thus preventing double-stranded DNA to enter the active site cleft. The NRPB4-NRPB7 subcomplex binds single-stranded DNA and RNA. This Arabidopsis thaliana (Mouse-ear cress) protein is DNA-directed RNA polymerase II subunit 7 (NRPB7).